The following is a 136-amino-acid chain: Small ribosomal subunit protein uS9 (136 aa).

The protein belongs to the universal ribosomal protein uS9 family.

The chain is Small ribosomal subunit protein uS9 from Borrelia duttonii (strain Ly).